The following is a 228-amino-acid chain: Ferric nitrobindin-like protein (228 aa).

A disordered region spans residues 1-21 (MTSDEVRDGAGSPADSSKGNK). Residues 75–81 (GVWRGEG) carry the GXWXGXG motif.

It belongs to the nitrobindin family.

In Mycobacterium leprae (strain TN), this protein is Ferric nitrobindin-like protein.